Reading from the N-terminus, the 451-residue chain is Cobyrinate a,c-diamide synthase (451 aa).

The GATase cobBQ-type domain occupies 246–437; the sequence is KIGVAYDEVF…VHTHVAAMPN (192 aa). C328 (nucleophile) is an active-site residue.

The protein belongs to the CobB/CbiA family. Mg(2+) serves as cofactor.

The enzyme catalyses cob(II)yrinate + 2 L-glutamine + 2 ATP + 2 H2O = cob(II)yrinate a,c diamide + 2 L-glutamate + 2 ADP + 2 phosphate + 2 H(+). It carries out the reaction Ni-sirohydrochlorin + 2 L-glutamine + 2 ATP + 2 H2O = Ni-sirohydrochlorin a,c-diamide + 2 L-glutamate + 2 ADP + 2 phosphate + 2 H(+). Its pathway is cofactor biosynthesis; adenosylcobalamin biosynthesis; cob(II)yrinate a,c-diamide from sirohydrochlorin (anaerobic route): step 10/10. In terms of biological role, catalyzes the ATP-dependent amidation of the two carboxylate groups at positions a and c of cobyrinate, using either L-glutamine or ammonia as the nitrogen source. Involved in the biosynthesis of the unique nickel-containing tetrapyrrole coenzyme F430, the prosthetic group of methyl-coenzyme M reductase (MCR), which plays a key role in methanogenesis and anaerobic methane oxidation. Catalyzes the ATP-dependent amidation of the two carboxylate groups at positions a and c of Ni-sirohydrochlorin, using L-glutamine or ammonia as the nitrogen source. In Methanobrevibacter smithii (strain ATCC 35061 / DSM 861 / OCM 144 / PS), this protein is Cobyrinate a,c-diamide synthase.